The chain runs to 616 residues: Glycogenin-1 (616 aa).

Leucine 10, tyrosine 16, and arginine 95 together coordinate UDP. UDP-alpha-D-glucose is bound by residues leucine 10, tyrosine 16, arginine 95, lysine 104, aspartate 120, aspartate 122, asparagine 158, serine 159, aspartate 185, aspartate 188, and glutamine 189. UDP is bound by residues aspartate 120 and aspartate 122. Residues aspartate 120 and aspartate 122 each coordinate Mn(2+). The O-linked (Glc...) tyrosine glycan is linked to tyrosine 230. The UDP site is built by histidine 247, glycine 250, and lysine 253. Histidine 247 serves as a coordination point for Mn(2+). UDP-alpha-D-glucose-binding residues include glycine 250 and lysine 253. Residues 283–302 are compositionally biased toward basic and acidic residues; that stretch reads HQLNNEVSKPKISDSDKTET. Disordered regions lie at residues 283–320, 335–354, and 371–516; these read HQLN…PTTN, NQNA…NPVP, and TNQP…SVDD. The span at 377–386 shows a compositional bias: basic and acidic residues; it reads ESREYSKEND. Residues 400–419 are compositionally biased toward polar residues; it reads SPPNSTQEPNSSYSVVSTQA. Residues 450–461 are compositionally biased toward low complexity; the sequence is STAASSNNNVSN. Polar residues-rich tracts occupy residues 462 to 485 and 492 to 503; these read QPDN…PSNP and DNIQKPSVSTND. Tyrosine 598 carries O-linked (Glc...) tyrosine glycosylation.

This sequence belongs to the glycosyltransferase 8 family. Glycogenin subfamily. Requires Mn(2+) as cofactor.

It is found in the cytoplasm. It localises to the vacuole. The enzyme catalyses L-tyrosyl-[glycogenin] + UDP-alpha-D-glucose = alpha-D-glucosyl-L-tyrosyl-[glycogenin] + UDP + H(+). It carries out the reaction [1,4-alpha-D-glucosyl](n)-L-tyrosyl-[glycogenin] + UDP-alpha-D-glucose = [1,4-alpha-D-glucosyl](n+1)-L-tyrosyl-[glycogenin] + UDP + H(+). Its function is as follows. Self-glucosylating initiator of glycogen synthesis. It catalyzes the formation of a short alpha (1,4)-glucosyl chain covalently attached via a glucose 1-O-tyrosyl linkage to internal tyrosine residues and these chains act as primers for the elongation reaction catalyzed by glycogen synthase. Capable of transferring glucosyl residues to unbound acceptors such as free oligoglucans or oligoglucan derivatives. The polypeptide is Glycogenin-1 (GLG1) (Saccharomyces cerevisiae (strain YJM789) (Baker's yeast)).